A 97-amino-acid polypeptide reads, in one-letter code: Putative pterin-4-alpha-carbinolamine dehydratase (97 aa).

It belongs to the pterin-4-alpha-carbinolamine dehydratase family.

The enzyme catalyses (4aS,6R)-4a-hydroxy-L-erythro-5,6,7,8-tetrahydrobiopterin = (6R)-L-erythro-6,7-dihydrobiopterin + H2O. This chain is Putative pterin-4-alpha-carbinolamine dehydratase, found in Phenylobacterium zucineum (strain HLK1).